A 492-amino-acid polypeptide reads, in one-letter code: Adenosylhomocysteinase (492 aa).

Threonine 68, aspartate 153, and glutamate 215 together coordinate substrate. Position 216 to 218 (216 to 218) interacts with NAD(+); that stretch reads TTT. Lysine 245 and aspartate 249 together coordinate substrate. NAD(+) is bound by residues asparagine 250, 279 to 284, glutamate 302, asparagine 337, 358 to 360, and asparagine 406; these read GYGDVG and IGH.

The protein belongs to the adenosylhomocysteinase family. NAD(+) is required as a cofactor.

The protein resides in the cytoplasm. The catalysed reaction is S-adenosyl-L-homocysteine + H2O = L-homocysteine + adenosine. Its pathway is amino-acid biosynthesis; L-homocysteine biosynthesis; L-homocysteine from S-adenosyl-L-homocysteine: step 1/1. Functionally, may play a key role in the regulation of the intracellular concentration of adenosylhomocysteine. The chain is Adenosylhomocysteinase from Mycobacterium marinum (strain ATCC BAA-535 / M).